A 225-amino-acid chain; its full sequence is Thymidylate kinase (225 aa).

10–17 (GGEGAGKT) provides a ligand contact to ATP.

This sequence belongs to the thymidylate kinase family.

The enzyme catalyses dTMP + ATP = dTDP + ADP. Functionally, phosphorylation of dTMP to form dTDP in both de novo and salvage pathways of dTTP synthesis. This chain is Thymidylate kinase, found in Oceanobacillus iheyensis (strain DSM 14371 / CIP 107618 / JCM 11309 / KCTC 3954 / HTE831).